The primary structure comprises 322 residues: Uracil-DNA glycosylase (322 aa).

Residue Asp142 is the Proton acceptor of the active site.

Belongs to the uracil-DNA glycosylase (UDG) superfamily. UNG family.

It localises to the mitochondrion. The protein resides in the nucleus. It carries out the reaction Hydrolyzes single-stranded DNA or mismatched double-stranded DNA and polynucleotides, releasing free uracil.. Functionally, excises uracil residues from the DNA which can arise as a result of misincorporation of dUMP residues by DNA polymerase or due to deamination of cytosine. The protein is Uracil-DNA glycosylase (ung1) of Schizosaccharomyces pombe (strain 972 / ATCC 24843) (Fission yeast).